Reading from the N-terminus, the 471-residue chain is MKNKWYKPKRHWKEIELWKDVPEEKWNDWLWQLTHTVRTLDDLKKVINLTEDEEEGVRISTKTIPLNITPYYASLMDPDNPRCPVRMQSVPLSEEMHKTKYDLEDPLHEDEDSPVPGLTHRYPDRVLFLVTNQCSMYCRYCTRRRFSGQIGMGVPKKQLDAAIAYIRETPEIRDCLISGGDGLLINDQILEYILKELRSIPHLEVIRIGTRAPVVFPQRITDHLCEILKKYHPVWLNTHFNTSIEMTEESVEACEKLVNAGVPVGNQAVVLAGINDSVPIMKKLMHDLVKIRVRPYYIYQCDLSEGIGHFRAPVSKGLEIIEGLRGHTSGYAVPTFVVDAPGGGGKIALQPNYVLSQSPDKVILRNFEGVITSYPEPENYIPNQADAYFESVFPETADKKEPIGLSAIFADKEVSFTPENVDRIKRREAYIANPEHETLKDRREKRDQLKEKKFLAQQKKQKETECGGDSS.

One can recognise a Radical SAM core domain in the interval 120–332 (HRYPDRVLFL…GLRGHTSGYA (213 aa)). [4Fe-4S] cluster is bound by residues C134, C138, and C141. K346 is subject to N6-(pyridoxal phosphate)lysine.

It belongs to the radical SAM superfamily. KamA family. Homotetramer. It depends on [4Fe-4S] cluster as a cofactor. Pyridoxal 5'-phosphate is required as a cofactor.

It carries out the reaction L-lysine = (3S)-3,6-diaminohexanoate. It participates in amino-acid degradation; L-lysine degradation via acetate pathway. Its function is as follows. Catalyzes the interconversion of L-alpha-lysine and L-beta-lysine. This chain is L-lysine 2,3-aminomutase (kamA), found in Bacillus subtilis (strain 168).